A 707-amino-acid polypeptide reads, in one-letter code: Eomesodermin homolog (707 aa).

Positions Gly-27–Ser-42 are enriched in gly residues. A disordered region spans residues Gly-27–Pro-125. Residues Ala-73–Ala-93 are compositionally biased toward low complexity. Residue Ser-117 is modified to Phosphoserine. The segment at residues Leu-278–Asp-458 is a DNA-binding region (T-box). Phosphothreonine is present on Thr-473. Residues Ala-592–Pro-707 form a required for transcription activation region. Positions Thr-642–Tyr-689 are disordered. Positions Ser-648–Tyr-657 are enriched in polar residues. The span at Ser-667–Pro-678 shows a compositional bias: low complexity. Basic and acidic residues predominate over residues Lys-680–Tyr-689.

As to expression, expressed in CD8+ T-cells.

The protein resides in the nucleus. In terms of biological role, functions as a transcriptional activator playing a crucial role during development. Functions in trophoblast differentiation and later in gastrulation, regulating both mesoderm delamination and endoderm specification. Plays a role in brain development being required for the specification and the proliferation of the intermediate progenitor cells and their progeny in the cerebral cortex. Required for differentiation and migration of unipolar dendritic brush cells. Also involved in the differentiation of CD8+ T-cells during immune response regulating the expression of lytic effector genes. The chain is Eomesodermin homolog (Eomes) from Mus musculus (Mouse).